A 3033-amino-acid chain; its full sequence is Genome polyprotein (3033 aa).

At Ser2 the chain carries N-acetylserine; by host. The interval 2–23 is interaction with STAT1; the sequence is STNPKPQRKTKRNTNRRPQDVK. The segment at 2 to 58 is interaction with EIF2AK2/PKR; it reads STNPKPQRKTKRNTNRRPQDVKFPGGGQIVGGVYLLPRRGPRLGVRATRKTSERSQP. The interval 2 to 59 is interaction with DDX3X; that stretch reads STNPKPQRKTKRNTNRRPQDVKFPGGGQIVGGVYLLPRRGPRLGVRATRKTSERSQPR. The segment at 2–75 is disordered; it reads STNPKPQRKT…PKDRRSTGKS (74 aa). Short sequence motifs (nuclear localization signal) lie at residues 5-13 and 38-43; these read PKPQRKTKR and PRRGPR. Residues 7-16 show a composition bias toward basic residues; the sequence is PQRKTKRNTN. A compositionally biased stretch (low complexity) spans 32-47; the sequence is GGVYLLPRRGPRLGVR. At Ser53 the chain carries Phosphoserine; by host. Short sequence motifs (nuclear localization signal) lie at residues 58–64 and 66–71; these read PRGRRQP and PKDRRS. Ser99 and Ser116 each carry phosphoserine; by host. Residues 112–152 are important for endoplasmic reticulum and mitochondrial localization; the sequence is PRHRSRNLGRVIDTITCGFADLMGYIPVVGAPVGGVARALA. Positions 122–173 are interaction with APOA2; that stretch reads VIDTITCGFADLMGYIPVVGAPVGGVARALAHGVRVLEDGINYATRNLPGCS. Positions 164-167 are important for lipid droplets localization; the sequence is YATR. A propeptide spans 178-191 (ER anchor for the core protein, removed in mature form by host signal peptidase); that stretch reads LLALLSCVTVPVSS. Residues 190-358 lie on the Lumenal side of the membrane; the sequence is SSVEIRNIST…FGGHWGVVFG (169 aa). N-linked (GlcNAc...) asparagine; by host glycosylation is found at Asn196 and Asn209. The interval 265 to 296 is important for fusion; the sequence is IVMAATVCSALYVGDVCGAVMIVSQALIVSPE. Residue Asn305 is glycosylated (N-linked (GlcNAc...) asparagine; by host). The chain crosses the membrane as a helical span at residues 359–379; the sequence is LAYFSMQGAWAKVIAILLLVA. The Lumenal segment spans residues 380–729; the sequence is GVDATTYSTG…WEWVVLLFLL (350 aa). The interval 385–412 is HVR1; it reads TYSTGATVGRTVGSFAGLFKLGAQQNVQ. 3 N-linked (GlcNAc...) (high mannose) asparagine; by host glycosylation sites follow: Asn417, Asn423, and Asn430. Cystine bridges form between Cys429–Cys554, Cys452–Cys459, Cys488–Cys496, and Cys505–Cys510. Residue Asn448 is glycosylated (N-linked (GlcNAc...) asparagine; by host). The tract at residues 475 to 480 is HVR2; sequence ETNVTN. Residue Asn477 is glycosylated (N-linked (GlcNAc...) asparagine; by host). Residues 482–495 are CD81-binding 1; that stretch reads EDMRPYCWHYPPKP. N-linked (GlcNAc...) asparagine; by host glycosylation is present at Asn534. Positions 546–553 are CD81-binding 2; that stretch reads PPRGAWFG. Asn558 carries an N-linked (GlcNAc...) asparagine; by host glycan. Cystine bridges form between Cys566–Cys571, Cys585–Cys589, Cys601–Cys624, and Cys611–Cys648. Residues Asn627 and Asn649 are each glycosylated (N-linked (GlcNAc...) (high mannose) asparagine; by host). An intrachain disulfide couples Cys656 to Cys681. The PKR/eIF2-alpha phosphorylation homology domain (PePHD) stretch occupies residues 664–675; sequence GQQSPLLHSTTE. Residues 730-750 traverse the membrane as a helical segment; sequence LADARICACLWMLIILGQAEA. Over 751–761 the chain is Lumenal; it reads ALEKLIILHSA. Residues 762–782 traverse the membrane as a helical segment; the sequence is SAASANGPLWFFIFFTAAWYL. At 783–786 the chain is on the cytoplasmic side; it reads KGRV. A helical membrane pass occupies residues 787–807; the sequence is VPAATYSVLGLWSFLLLVLAL. Residues 808-817 lie on the Lumenal side of the membrane; it reads PQQAYALDAA. Residues 818 to 838 traverse the membrane as a helical segment; it reads EQGELGLVILMIISIFTLTPA. The Cytoplasmic segment spans residues 839–885; sequence YKILLSRSVWWLSYMLVLAEAQVQQWVPPLEARGGRDGIIWVAVILH. A helical transmembrane segment spans residues 886 to 906; it reads PHLVFEVTKWLLAILGSAYLL. Topologically, residues 907-932 are lumenal; that stretch reads KASLLRVPYFVRAHALLRVCTLVRHL. The Peptidase C18 domain maps to 907-1030; it reads KASLLRVPYF…GYTSKGWKLL (124 aa). Residues 908–1210 are protease NS2-3; it reads ASLLRVPYFV…PVESLDIARR (303 aa). A lipid anchor (S-palmitoyl cysteine; by host) is attached at Cys926. Residues 933–953 form a helical membrane-spanning segment; sequence AGARYIQMLLITMGRWTGTYI. The interval 933–953 is interaction with host SCPS1; it reads AGARYIQMLLITMGRWTGTYI. Residues 954–1661 lie on the Cytoplasmic side of the membrane; the sequence is YDHLSPLSTW…CMQADLEVMT (708 aa). Catalysis depends on for protease NS2 activity; shared with dimeric partner residues His956, Glu976, and Cys997. In terms of domain architecture, Peptidase S29 spans 1031–1212; sequence APITAYTQQT…ESLDIARRTP (182 aa). Active-site charge relay system; for serine protease NS3 activity residues include His1087 and Asp1111. 2 residues coordinate Zn(2+): Cys1127 and Cys1129. The Charge relay system; for serine protease NS3 activity role is filled by Ser1169. Zn(2+) is bound by residues Cys1175 and His1179. The Helicase ATP-binding domain maps to 1221–1373; that stretch reads PAVPQTYQVG…ANIEEVALGH (153 aa). 1234–1241 contacts ATP; it reads APTGSGKS. Mg(2+) is bound by residues Ser1241 and Glu1321. The short motif at 1320 to 1323 is the DECH box element; sequence DECH. The RNA-binding stretch occupies residues 1490-1502; sequence QRRGRTGRGRLGT. Residues 1662–1682 traverse the membrane as a helical segment; the sequence is STWVLAGGVLAAVAAYCLATG. Residues 1683-1694 are NS3-binding; the sequence is CISIIGRIHLND. Residues 1683–1809 lie on the Cytoplasmic side of the membrane; sequence CISIIGRIHL…ALTSPLPTST (127 aa). Residues 1810–1830 traverse the membrane as a helical segment; it reads TILLNIMGGWLASQIAPPAGA. The Lumenal portion of the chain corresponds to 1831 to 1832; sequence TG. Residues 1833-1853 traverse the membrane as a helical segment; it reads FVVSGLVGAAVGSIGLGKILV. Residue Asp1854 is a topological domain, cytoplasmic. A helical transmembrane segment spans residues 1855 to 1875; sequence VLAGYGAGISGALVAFKIMSG. Topologically, residues 1876–1885 are lumenal; the sequence is EKPSVEDVVN. A helical transmembrane segment spans residues 1886-1906; the sequence is LLPAILSPGALVVGVICAAIL. The Cytoplasmic portion of the chain corresponds to 1907–1976; it reads RRHVGQGEGA…WITEDCPVPC (70 aa). Cys1976 is lipidated: S-palmitoyl cysteine; by host. An intramembrane segment occupies 1977–2007; that stretch reads SGSWLRDIWEWVCSILTDFKNWLSAKLLPKM. The Cytoplasmic segment spans residues 2008 to 3012; sequence PGLPFISCQK…FHSVSHARPR (1005 aa). Positions 2015, 2033, 2035, and 2056 each coordinate Zn(2+). Residues 2124-2212 form an FKBP8-binding region; that stretch reads EFFSWVDGVQ…ASSSASQLSA (89 aa). The transcriptional activation stretch occupies residues 2124–2332; sequence EFFSWVDGVQ…PVPPPRRRRA (209 aa). Positions 2139–2143 are interaction with non-structural protein 4A; that stretch reads PTPGP. The segment at 2192–2213 is disordered; the sequence is RRLARGSPPSQASSSASQLSAP. An interaction with host SKP2 region spans residues 2193–2460; sequence RLARGSPPSQ…ALITPCGPEE (268 aa). Ser2198, Ser2201, Ser2205, Ser2208, Ser2211, and Ser2214 each carry phosphoserine; by host. The span at 2198 to 2213 shows a compositional bias: low complexity; that stretch reads SPPSQASSSASQLSAP. Residues 2214–2249 are ISDR; that stretch reads SLKATCTTHKTAYDCDMVDANLFMGGDVTRIESDSK. Residues 2214–2275 are interaction with EIF2AK2/PKR; the sequence is SLKATCTTHK…REPSVPSEYL (62 aa). The tract at residues 2249–2306 is NS4B-binding; that stretch reads KVIVLDSLDSMTEVEDDREPSVPSEYLTRRRKFPPALPPWARPDYNPPVIETWKRPDY. Residues 2299–2377 are V3; that stretch reads ETWKRPDYEP…DTGGDSVQQP (79 aa). Residues 2322-2325 carry the SH3-binding motif; it reads APVP. The short motif at 2327–2335 is the Nuclear localization signal element; the sequence is PRRRRARVL. A Glycyl lysine isopeptide (Lys-Gly) (interchain with G-Cter in ubiquitin) cross-link involves residue Lys2350. Residues 2354-2431 form a disordered region; it reads PLQDTNDSGH…IDSDSKSWST (78 aa). Polar residues predominate over residues 2355-2391; it reads LQDTNDSGHSTGADTGGDSVQQPSGETAASDAGSLSS. Phosphoserine; by host is present on residues Ser2471 and Ser2484. Residues 2656 to 2774 enclose the RdRp catalytic domain; the sequence is PMGFSYDTRC…ISESQGNEED (119 aa). Mg(2+)-binding residues include Asp2662, Asp2760, and Asp2761. The chain crosses the membrane as a helical span at residues 3013 to 3033; that stretch reads LLLLCLLLLSVGVGIFLLPAR.

Belongs to the hepacivirus polyprotein family. In terms of assembly, homooligomer. Interacts with E1 (via C-terminus). Interacts with the non-structural protein 5A. Interacts (via N-terminus) with host STAT1 (via SH2 domain); this interaction results in decreased STAT1 phosphorylation and ubiquitin-mediated proteasome-dependent STAT1 degradation, leading to decreased IFN-stimulated gene transcription. Interacts with host STAT3; this interaction constitutively activates STAT3. Interacts with host LTBR receptor. Interacts with host TNFRSF1A receptor and possibly induces apoptosis. Interacts with host HNRPK. Interacts with host YWHAE. Interacts with host UBE3A/E6AP. Interacts with host DDX3X. Interacts with host APOA2. Interacts with host RXRA protein. Interacts with host SP110 isoform 3/Sp110b; this interaction sequesters the transcriptional corepressor SP110 away from the nucleus. Interacts with host CREB3 nuclear transcription protein; this interaction triggers cell transformation. Interacts with host ACY3. Interacts with host C1QR1. Interacts with host RBM24; this interaction, which enhances the interaction of the mature core protein with 5'-UTR, may inhibit viral translation and favor replication. Interacts with host EIF2AK2/PKR; this interaction induces the autophosphorylation of EIF2AK2. Part of the viral assembly initiation complex composed of NS2, E1, E2, NS3, NS4A, NS5A and the mature core protein. As to quaternary structure, forms a heterodimer with envelope glycoprotein E2. Interacts with mature core protein. Interacts with protease NS2. The heterodimer E1/E2 interacts with host CLDN1; this interaction plays a role in viral entry into host cell. Interacts with host SPSB2 (via C-terminus). Part of the viral assembly initiation complex composed of NS2, E1, E2, NS3, NS4A, NS5A and the mature core protein. Interacts with host NEURL3; this interaction prevents E1 binding to glycoprotein E2. Forms a heterodimer with envelope glycoprotein E1. Interacts with host CD81 and SCARB1 receptors; these interactions play a role in viral entry into host cell. Interacts with host EIF2AK2/PKR; this interaction inhibits EIF2AK2 and probably allows the virus to evade the innate immune response. Interacts with host CD209/DC-SIGN and CLEC4M/DC-SIGNR. Interact with host SPCS1; this interaction is essential for viral particle assembly. Interacts with protease NS2. The heterodimer E1/E2 interacts with host CLDN1; this interaction plays a role in viral entry into host cell. Part of the viral assembly initiation complex composed of NS2, E1, E2, NS3, NS4A, NS5A and the mature core protein. Interacts with host SLC3A2/4F2hc; the interaction may facilitate viral entry into host cell. Interacts with human PLSCR1. In terms of assembly, homohexamer. Homoheptamer. Interacts with protease NS2. As to quaternary structure, homodimer. Interacts with host SPCS1; this interaction is essential for viral particle assembly. Interacts with envelope glycoprotein E1. Interacts with envelope glycoprotein E2. Interacts with viroporin p7. Interacts with serine protease/helicase NS3. Part of the replication complex composed of NS2, NS3, NS4A, NS4B, NS5A and the RNA-directed RNA polymerase embedded in an ER-derived membranous web. Part of the viral assembly initiation complex composed of NS2, E1, E2, NS3, NS4A, NS5A and the mature core protein. Interacts with protease NS2. Interacts with non-structural protein 4A; this interaction stabilizes the folding of NS3 serine protease. NS3-NS4A interaction is essential for NS3 activation and allows membrane anchorage of the latter. NS3/NS4A complex also prevents phosphorylation of host IRF3, thus preventing the establishment of dsRNA induced antiviral state. Interacts with host MAVS; this interaction leads to the cleavage and inhibition of host MAVS. Interacts with host TICAM1; this interaction leads to the cleavage and inhibition of host TICAM1. Interacts with host TANK-binding kinase/TBK1; this interaction results in the inhibition of the association between TBK1 and IRF3, which leads to the inhibition of IRF3 activation. Interacts with host RBM24. Part of the replication complex composed of NS2, NS3, NS4A, NS4B, NS5A and the RNA-directed RNA polymerase embedded in an ER-derived membranous web. Part of the viral assembly initiation complex composed of NS2, E1, E2, NS3, NS4A, NS5A and the mature core protein. In terms of assembly, interacts with NS3 serine protease; this interaction stabilizes the folding of NS3 serine protease. NS3-NS4A interaction is essential for NS3 activation and allows membrane anchorage of the latter. Interacts with non-structural protein 5A (via N-terminus). Part of the replication complex composed of NS2, NS3, NS4A, NS4B, NS5A and the RNA-directed RNA polymerase embedded in an ER-derived membranous web. Part of the viral assembly initiation complex composed of NS2, E1, E2, NS3, NS4A, NS5A and the mature core protein. As to quaternary structure, homomultimer. Interacts with non-structural protein NS5A. Interacts with host PLA2G4C; this interaction likely initiates the recruitment of replication complexes to lipid droplets. Interacts with host STING; this interaction disrupts the interaction between STING and TBK1 thereby suppressing the interferon signaling. Part of the replication complex composed of NS2, NS3, NS4A, NS4B, NS5A and the RNA-directed RNA polymerase embedded in an ER-derived membranous web. Monomer. Homodimer; dimerization is required for RNA-binding. Interacts with the mature core protein. Interacts (via N-terminus) with non-structural protein 4A. Interacts with non-structural protein 4B. Interacts (via region D2) with RNA-directed RNA polymerase. Part of the viral assembly initiation complex composed of NS2, E1, E2, NS3, NS4A, NS5A and the mature core protein. Part of the replication complex composed of NS2, NS3, NS4A, NS4B, NS5A and the RNA-directed RNA polymerase embedded in an ER-derived membranous web. Interacts with host GRB2. Interacts with host BIN1. Interacts with host PIK3R1. Interacts with host SRCAP. Interacts with host FKBP8. Interacts (via C-terminus) with host VAPB (via MSP domain). Interacts with host EIF2AK2/PKR; this interaction leads to disruption of EIF2AK2 dimerization by NS5A and probably allows the virus to evade the innate immune response. Interacts (via N-terminus) with host PACSIN2 (via N-terminus); this interaction attenuates protein kinase C alpha-mediated phosphorylation of PACSIN2 by disrupting the interaction between PACSIN2 and PRKCA. Interacts (via N-terminus) with host SRC kinase (via SH2 domain). Interacts with most Src-family kinases. Interacts with host IFI27 and SKP2; promotes the ubiquitin-mediated proteasomal degradation of NS5A. Interacts with host GPS2. Interacts with host TNFRSF21; this interaction allows the modulation by the virus of JNK, p38 MAPK, STAT3, and Akt signaling pathways in a DR6-dependent manner. Interacts (via N-terminus) with host CIDEB (via N-terminus); this interaction seems to regulate the association of HCV particles with APOE. Interacts with host CHKA/Choline Kinase-alpha; CHKA bridges host PI4KA and NS5A and potentiates NS5A-stimulated PI4KA activity, which then facilitates the targeting of the ternary complex to the ER for viral replication. Interacts with host SPSB2 (via C-terminus); this interaction targets NS5A for ubiquitination and degradation. Interacts with host RAB18; this interaction may promote the association of NS5A and other replicase components with lipid droplets. Interacts (via region D2) with host PPIA/CYPA; the interaction stimulates RNA-binding ability of NS5A and is dependent on the peptidyl-prolyl cis-trans isomerase activity of PPIA/CYPA. Interacts with host TRIM14; this interaction induces the degradation of NS5A. In terms of assembly, homooligomer. Interacts with non-structural protein 5A. Interacts with host VAPB. Interacts with host PRK2/PKN2. Interacts with host HNRNPA1 and SEPT6; these interactions facilitate viral replication. Part of the replication complex composed of NS2, NS3, NS4A, NS4B, NS5A and the RNA-directed RNA polymerase. Zn(2+) is required as a cofactor. It depends on Mg(2+) as a cofactor. In terms of processing, specific enzymatic cleavages in vivo yield mature proteins. The structural proteins, core, E1, E2 and p7 are produced by proteolytic processing by host signal peptidases. The core protein precursor is synthesized as a 23 kDa, which is retained in the ER membrane through the hydrophobic signal peptide. Cleavage by the signal peptidase releases the 21 kDa mature core protein. The cleavage of the core protein precursor occurs between aminoacids 176 and 188 but the exact cleavage site is not known. Some degraded forms of the core protein appear as well during the course of infection. The other proteins (p7, NS2, NS3, NS4A, NS4B, NS5A and NS5B) are cleaved by the viral proteases. Autoprocessing between NS2 and NS3 is mediated by the NS2 cysteine protease catalytic domain and regulated by the NS3 N-terminal domain. Phosphorylated by host PKC and PKA. Post-translationally, ubiquitinated; mediated by UBE3A and leading to core protein subsequent proteasomal degradation. In terms of processing, highly N-glycosylated. Palmitoylation is required for NS2/3 autoprocessing and E2 recruitment to membranes. Post-translationally, palmitoylated. This modification may play a role in its polymerization or in protein-protein interactions. In terms of processing, phosphorylated on serines in a basal form termed p56. p58 is a hyperphosphorylated form of p56. p56 and p58 coexist in the cell in roughly equivalent amounts. Hyperphosphorylation is dependent on the presence of NS4A. Host CSNK1A1/CKI-alpha or RPS6KB1 kinases may be responsible for NS5A phosphorylation. Tyrosine phosphorylation is essential for the interaction with host SRC. Post-translationally, ubiquitinated. Ubiquitination, most probably at Lys-2350, mediated by host IFI27 and SKP2 leads to proteasomal degradation, restricting viral infection. Ubiquitination by host TRIM22 leads to interruption of viral replication. In terms of processing, the N-terminus is phosphorylated by host PRK2/PKN2.

It is found in the host endoplasmic reticulum membrane. The protein resides in the host mitochondrion membrane. It localises to the virion. Its subcellular location is the host cytoplasm. The protein localises to the host nucleus. It is found in the host lipid droplet. The protein resides in the virion membrane. It localises to the host mitochondrion. Its subcellular location is the host cell membrane. The protein localises to the host perinuclear region. The catalysed reaction is Hydrolysis of four peptide bonds in the viral precursor polyprotein, commonly with Asp or Glu in the P6 position, Cys or Thr in P1 and Ser or Ala in P1'.. It catalyses the reaction a ribonucleoside 5'-triphosphate + H2O = a ribonucleoside 5'-diphosphate + phosphate + H(+). It carries out the reaction ATP + H2O = ADP + phosphate + H(+). The enzyme catalyses RNA(n) + a ribonucleoside 5'-triphosphate = RNA(n+1) + diphosphate. Its activity is regulated as follows. Inhibited by the antiviral drug hexamethylene amiloride. Inhibition by amantadine appears to be genotype-dependent. Also inhibited by long-alkyl-chain iminosugar derivatives. With respect to regulation, activity is up-regulated by PRK2/PKN2-mediated phosphorylation. Its function is as follows. Packages viral RNA to form a viral nucleocapsid, and promotes virion budding. Participates in the viral particle production as a result of its interaction with the non-structural protein 5A. Binds RNA and may function as a RNA chaperone to induce the RNA structural rearrangements taking place during virus replication. Modulates viral translation initiation by interacting with viral IRES and 40S ribosomal subunit. Affects various cell signaling pathways, host immunity and lipid metabolism. Prevents the establishment of cellular antiviral state by blocking the interferon-alpha/beta (IFN-alpha/beta) and IFN-gamma signaling pathways and by blocking the formation of phosphorylated STAT1 and promoting ubiquitin-mediated proteasome-dependent degradation of STAT1. Activates STAT3 leading to cellular transformation. Regulates the activity of cellular genes, including c-myc and c-fos. May repress the promoter of p53, and sequester CREB3 and SP110 isoform 3/Sp110b in the cytoplasm. Represses cell cycle negative regulating factor CDKN1A, thereby interrupting an important check point of normal cell cycle regulation. Targets transcription factors involved in the regulation of inflammatory responses and in the immune response: suppresses TNF-induced NF-kappa-B activation, and activates AP-1. Binds to dendritic cells (DCs) via C1QR1, resulting in down-regulation of T-lymphocytes proliferation. Alters lipid metabolism by interacting with hepatocellular proteins involved in lipid accumulation and storage. Induces up-regulation of FAS promoter activity, and thereby contributes to the increased triglyceride accumulation in hepatocytes (steatosis). Forms a heterodimer with envelope glycoprotein E2, which mediates virus attachment to the host cell, virion internalization through clathrin-dependent endocytosis and fusion with host membrane. Fusion with the host cell is most likely mediated by both E1 and E2, through conformational rearrangements of the heterodimer required for fusion rather than a classical class II fusion mechanism. E1/E2 heterodimer binds host apolipoproteins such as APOB and ApoE thereby forming a lipo-viro-particle (LVP). APOE associated to the LVP allows the initial virus attachment to cell surface receptors such as the heparan sulfate proteoglycans (HSPGs), syndecan-1 (SDC1), syndecan-1 (SDC2), the low-density lipoprotein receptor (LDLR) and scavenger receptor class B type I (SCARB1). The cholesterol transfer activity of SCARB1 allows E2 exposure and binding of E2 to SCARB1 and the tetraspanin CD81. E1/E2 heterodimer binding on CD81 activates the epithelial growth factor receptor (EGFR) signaling pathway. Diffusion of the complex E1-E2-EGFR-SCARB1-CD81 to the cell lateral membrane allows further interaction with Claudin 1 (CLDN1) and occludin (OCLN) to finally trigger HCV entry. Functionally, forms a heterodimer with envelope glycoprotein E1, which mediates virus attachment to the host cell, virion internalization through clathrin-dependent endocytosis and fusion with host membrane. Fusion with the host cell is most likely mediated by both E1 and E2, through conformational rearrangements of the heterodimer required for fusion rather than a classical class II fusion mechanism. The interaction between envelope glycoprotein E2 and host apolipoprotein E/APOE allows the proper assembly, maturation and infectivity of the viral particles. This interaction is probably promoted via the up-regulation of cellular autophagy by the virus. E1/E2 heterodimer binds host apolipoproteins such as APOB and APOE thereby forming a lipo-viro-particle (LVP). APOE associated to the LVP allows the initial virus attachment to cell surface receptors such as the heparan sulfate proteoglycans (HSPGs), syndecan-1 (SDC1), syndecan-1 (SDC2), the low-density lipoprotein receptor (LDLR) and scavenger receptor class B type I (SCARB1). The cholesterol transfer activity of SCARB1 allows E2 exposure and binding of E2 to SCARB1 and the tetraspanin CD81. E1/E2 heterodimer binding on CD81 activates the epithelial growth factor receptor (EGFR) signaling pathway. Diffusion of the complex E1-E2-EGFR-SCARB1-CD81 to the cell lateral membrane allows further interaction with Claudin 1 (CLDN1) and occludin (OCLN) to finally trigger HCV entry. Inhibits host EIF2AK2/PKR activation, preventing the establishment of an antiviral state. Viral ligand for CD209/DC-SIGN and CLEC4M/DC-SIGNR, which are respectively found on dendritic cells (DCs), and on liver sinusoidal endothelial cells and macrophage-like cells of lymph node sinuses. These interactions allow the capture of circulating HCV particles by these cells and subsequent facilitated transmission to permissive cells such as hepatocytes and lymphocyte subpopulations. The interaction between E2 and host amino acid transporter complex formed by SLC3A2 and SLC7A5/LAT1 may facilitate viral entry into host cell. In terms of biological role, ion channel protein that acts as a viroporin and plays an essential role in the assembly, envelopment and secretion of viral particles. Regulates the host cell secretory pathway, which induces the intracellular retention of viral glycoproteins and favors assembly of viral particles. Creates a pore in acidic organelles and releases Ca(2+) and H(+) in the cytoplasm of infected cells, leading to a productive viral infection. High levels of cytoplasmic Ca(2+) may trigger membrane trafficking and transport of viral ER-associated proteins to viroplasms, sites of viral genome replication. This ionic imbalance induces the assembly of the inflammasome complex, which triggers the maturation of pro-IL-1beta into IL-1beta through the action of caspase-1. Targets also host mitochondria and induces mitochondrial depolarization. In addition of its role as a viroporin, acts as a lipid raft adhesion factor. Its function is as follows. Cysteine protease required for the proteolytic auto-cleavage between the non-structural proteins NS2 and NS3. The N-terminus of NS3 is required for the function of NS2 protease (active region NS2-3). Promotes the initiation of viral particle assembly by mediating the interaction between structural and non-structural proteins. Displays three enzymatic activities: serine protease with a chymotrypsin-like fold, NTPase and RNA helicase. NS3 serine protease, in association with NS4A, is responsible for the cleavages of NS3-NS4A, NS4A-NS4B, NS4B-NS5A and NS5A-NS5B. The NS3/NS4A complex prevents phosphorylation of host IRF3, thus preventing the establishment of dsRNA induced antiviral state. The NS3/NS4A complex induces host amino acid transporter component SLC3A2, thus contributing to HCV propagation. NS3 RNA helicase binds to RNA and unwinds both dsDNA and dsRNA in the 3' to 5' direction, and likely resolves RNA complicated stable secondary structures in the template strand. Binds a single ATP and catalyzes the unzipping of a single base pair of dsRNA. Inhibits host antiviral proteins TBK1 and IRF3 thereby preventing the establishment of an antiviral state. Cleaves host MAVS/CARDIF thereby preventing the establishment of an antiviral state. Cleaves host TICAM1/TRIF, thereby disrupting TLR3 signaling and preventing the establishment of an antiviral state. Functionally, induces a specific membrane alteration that serves as a scaffold for the virus replication complex. This membrane alteration gives rise to the so-called ER-derived membranous web that contains the replication complex. NS4B self-interaction contributes to its function in membranous web formation. Promotes host TRIF protein degradation in a CASP8-dependent manner thereby inhibiting host TLR3-mediated interferon signaling. Disrupts the interaction between STING and TBK1 contributing to the inhibition of interferon signaling. In terms of biological role, phosphorylated protein that is indispensable for viral replication and assembly. Both hypo- and hyperphosphorylated states are required for the viral life cycle. The hyperphosphorylated form of NS5A is an inhibitor of viral replication. Involved in RNA-binding and especially in binding to the viral genome. Zinc is essential for RNA-binding. Participates in the viral particle production as a result of its interaction with the mature viral core protein. Its interaction with host VAPB may target the viral replication complex to vesicles. Down-regulates viral IRES translation initiation. Mediates interferon resistance, presumably by interacting with and inhibiting host EIF2AK2/PKR. Prevents BIN1-induced apoptosis. Acts as a transcriptional activator of some host genes important for viral replication when localized in the nucleus. Via the interaction with host PACSIN2, modulates lipid droplet formation in order to promote virion assembly. Modulates TNFRSF21/DR6 signaling pathway for viral propagation. Its function is as follows. RNA-dependent RNA polymerase that performs primer-template recognition and RNA synthesis during viral replication. Initiates RNA transcription/replication at a flavin adenine dinucleotide (FAD), resulting in a 5'- FAD cap on viral RNAs. In this way, recognition of viral 5' RNA by host pattern recognition receptors can be bypassed, thereby evading activation of antiviral pathways. In Hepatitis C virus genotype 2b (isolate JPUT971017) (HCV), this protein is Genome polyprotein.